Here is a 132-residue protein sequence, read N- to C-terminus: Small ribosomal subunit protein uS8 (132 aa).

It belongs to the universal ribosomal protein uS8 family. As to quaternary structure, part of the 30S ribosomal subunit. Contacts proteins S5 and S12.

In terms of biological role, one of the primary rRNA binding proteins, it binds directly to 16S rRNA central domain where it helps coordinate assembly of the platform of the 30S subunit. This chain is Small ribosomal subunit protein uS8, found in Syntrophobacter fumaroxidans (strain DSM 10017 / MPOB).